The primary structure comprises 370 residues: MATHKLLLLPGDGIGTEVMAEVKRLIDWLNAQGIAHFETEDGLVGGAAYDADKVAITDATMAKAQASDAVIFGAVGGAKWDGVPYEARPEAGLLRLRKDLGLFANLRPAVCYPALADSSSLKREVVEGLDIMIVRELTGGVYFGEPKTITDLGNGQKRAIDTQVYDSYEIDRIARVAFDLARKRRNKVTSMEKRNVMKSGVLWNEVVTRVHAEDYKDVQLEHQLADSGGMNLVKWPKQFDVIVTDNLFGDILSDIAAMLTGSLGMLPSASLGAVDANTGKRKSMYEPVHGSAPDIAGKGLANPVAMLASFGMALRYSLDMGELADKLDAAIAAVLAKGLRTADIKSEGSTVISTSQMGEAILKEMQALHA.

77–90 (GAKWDGVPYEARPE) contacts NAD(+). Positions 97, 107, 135, and 226 each coordinate substrate. Mg(2+) is bound by residues D226, D250, and D254. 290-302 (GSAPDIAGKGLAN) provides a ligand contact to NAD(+).

This sequence belongs to the isocitrate and isopropylmalate dehydrogenases family. LeuB type 1 subfamily. As to quaternary structure, homodimer. It depends on Mg(2+) as a cofactor. Mn(2+) is required as a cofactor.

The protein resides in the cytoplasm. It catalyses the reaction (2R,3S)-3-isopropylmalate + NAD(+) = 4-methyl-2-oxopentanoate + CO2 + NADH. It participates in amino-acid biosynthesis; L-leucine biosynthesis; L-leucine from 3-methyl-2-oxobutanoate: step 3/4. In terms of biological role, catalyzes the oxidation of 3-carboxy-2-hydroxy-4-methylpentanoate (3-isopropylmalate) to 3-carboxy-4-methyl-2-oxopentanoate. The product decarboxylates to 4-methyl-2 oxopentanoate. This Rhodopseudomonas palustris (strain BisB18) protein is 3-isopropylmalate dehydrogenase.